Here is a 179-residue protein sequence, read N- to C-terminus: ATP synthase subunit delta (179 aa).

The protein belongs to the ATPase delta chain family. F-type ATPases have 2 components, F(1) - the catalytic core - and F(0) - the membrane proton channel. F(1) has five subunits: alpha(3), beta(3), gamma(1), delta(1), epsilon(1). F(0) has three main subunits: a(1), b(2) and c(10-14). The alpha and beta chains form an alternating ring which encloses part of the gamma chain. F(1) is attached to F(0) by a central stalk formed by the gamma and epsilon chains, while a peripheral stalk is formed by the delta and b chains.

Its subcellular location is the cell membrane. F(1)F(0) ATP synthase produces ATP from ADP in the presence of a proton or sodium gradient. F-type ATPases consist of two structural domains, F(1) containing the extramembraneous catalytic core and F(0) containing the membrane proton channel, linked together by a central stalk and a peripheral stalk. During catalysis, ATP synthesis in the catalytic domain of F(1) is coupled via a rotary mechanism of the central stalk subunits to proton translocation. In terms of biological role, this protein is part of the stalk that links CF(0) to CF(1). It either transmits conformational changes from CF(0) to CF(1) or is implicated in proton conduction. This chain is ATP synthase subunit delta, found in Listeria monocytogenes serovar 1/2a (strain ATCC BAA-679 / EGD-e).